Reading from the N-terminus, the 692-residue chain is Vitamin B12-dependent ribonucleoside-diphosphate reductase (692 aa).

One can recognise an ATP-cone domain in the interval 7-95 (AKVRRRDGTL…IYRQRRAELR (89 aa)). Substrate-binding positions include Ser-177, 192–193 (GC), Gly-221, 375–379 (NPCGE), and 520–524 (PTGTI). Cys-193 and Cys-388 form a disulfide bridge. Asn-375 (proton acceptor) is an active-site residue. Cys-377 (cysteine radical intermediate) is an active-site residue. The active-site Proton acceptor is Glu-379.

It belongs to the ribonucleoside diphosphate reductase class-2 family. Adenosylcob(III)alamin is required as a cofactor.

The enzyme catalyses a 2'-deoxyribonucleoside 5'-diphosphate + [thioredoxin]-disulfide + H2O = a ribonucleoside 5'-diphosphate + [thioredoxin]-dithiol. Functionally, provides the precursors necessary for DNA synthesis. Catalyzes the biosynthesis of deoxyribonucleotides from the corresponding ribonucleotides. The sequence is that of Vitamin B12-dependent ribonucleoside-diphosphate reductase (nrdZ) from Mycobacterium tuberculosis (strain CDC 1551 / Oshkosh).